Reading from the N-terminus, the 435-residue chain is Gamma-glutamyl phosphate reductase (435 aa).

Belongs to the gamma-glutamyl phosphate reductase family.

The protein resides in the cytoplasm. It catalyses the reaction L-glutamate 5-semialdehyde + phosphate + NADP(+) = L-glutamyl 5-phosphate + NADPH + H(+). It participates in amino-acid biosynthesis; L-proline biosynthesis; L-glutamate 5-semialdehyde from L-glutamate: step 2/2. Catalyzes the NADPH-dependent reduction of L-glutamate 5-phosphate into L-glutamate 5-semialdehyde and phosphate. The product spontaneously undergoes cyclization to form 1-pyrroline-5-carboxylate. The protein is Gamma-glutamyl phosphate reductase of Synechococcus sp. (strain CC9605).